The chain runs to 462 residues: MGKTLFDKLWNRHVIYGKEGEPQLLYVDLHLIHEVTSPQAFEGLRMENRPLRRPDKTFATMDHNVPTEDIFNIQDLVAKKQIEALQTNCEEFGVTLADMGSDRQGIVHMVGPETGLTQPGKVIVCGDSHTATHGAFGAIGFGIGSSEVEHVFATQTIWQQKPKSMGIEINGKLPKGVYAKDIILHLIATYGVAFGTGYAVEYYGETIRNMSMEERMTICNMAIEGGAKMGMMAPDQTTFEYVRGREYAPSDMEKAIRDWETLKTDPDAEYDLHIEMDASILEPYVTWGTNPEMGVPFSKAFPEIKDMNYERAYEYMGLKPGQTAEEIELGYVFIGSCTNARLSDLEEAARIVKGNKVKNNIRALVVPGSRQVRNAAEAIGLDKIFKDAGFEWREPGCSMCLGMNPDQVPDGVHCASTSNRNFEGRQGKGARTHLVSPAMAAAAAINGHFIDIRKEAVISGGN.

Residues C337, C397, and C400 each coordinate [4Fe-4S] cluster.

This sequence belongs to the aconitase/IPM isomerase family. LeuC type 1 subfamily. As to quaternary structure, heterodimer of LeuC and LeuD. [4Fe-4S] cluster serves as cofactor.

It carries out the reaction (2R,3S)-3-isopropylmalate = (2S)-2-isopropylmalate. Its pathway is amino-acid biosynthesis; L-leucine biosynthesis; L-leucine from 3-methyl-2-oxobutanoate: step 2/4. In terms of biological role, catalyzes the isomerization between 2-isopropylmalate and 3-isopropylmalate, via the formation of 2-isopropylmaleate. The chain is 3-isopropylmalate dehydratase large subunit from Listeria innocua serovar 6a (strain ATCC BAA-680 / CLIP 11262).